We begin with the raw amino-acid sequence, 106 residues long: Small ribosomal subunit protein uS10 (106 aa).

Belongs to the universal ribosomal protein uS10 family. Part of the 30S ribosomal subunit.

Its function is as follows. Involved in the binding of tRNA to the ribosomes. The protein is Small ribosomal subunit protein uS10 of Mycoplasma genitalium (strain ATCC 33530 / DSM 19775 / NCTC 10195 / G37) (Mycoplasmoides genitalium).